Here is a 1377-residue protein sequence, read N- to C-terminus: DNA-directed RNA polymerase subunit beta (1377 aa).

It belongs to the RNA polymerase beta chain family. In terms of assembly, the RNAP catalytic core consists of 2 alpha, 1 beta, 1 beta' and 1 omega subunit. When a sigma factor is associated with the core the holoenzyme is formed, which can initiate transcription.

The catalysed reaction is RNA(n) + a ribonucleoside 5'-triphosphate = RNA(n+1) + diphosphate. DNA-dependent RNA polymerase catalyzes the transcription of DNA into RNA using the four ribonucleoside triphosphates as substrates. The sequence is that of DNA-directed RNA polymerase subunit beta from Brucella abortus (strain S19).